Here is a 154-residue protein sequence, read N- to C-terminus: Ribosome maturation factor RimP (154 aa).

Belongs to the RimP family.

It is found in the cytoplasm. Required for maturation of 30S ribosomal subunits. This chain is Ribosome maturation factor RimP, found in Ruthia magnifica subsp. Calyptogena magnifica.